The following is a 108-amino-acid chain: ATP synthase epsilon chain (108 aa).

The protein belongs to the ATPase epsilon chain family. F-type ATPases have 2 components, CF(1) - the catalytic core - and CF(0) - the membrane proton channel. CF(1) has five subunits: alpha(3), beta(3), gamma(1), delta(1), epsilon(1). CF(0) has three main subunits: a, b and c.

It is found in the cell inner membrane. Produces ATP from ADP in the presence of a proton gradient across the membrane. This chain is ATP synthase epsilon chain, found in Rickettsia bellii (strain OSU 85-389).